A 256-amino-acid chain; its full sequence is Protein FixA (256 aa).

It belongs to the ETF beta-subunit/FixA family. As to quaternary structure, heterodimer of FixA and FixB.

It participates in amine and polyamine metabolism; carnitine metabolism. Functionally, required for anaerobic carnitine reduction. May bring reductant to CaiA. This is Protein FixA from Escherichia coli O6:H1 (strain CFT073 / ATCC 700928 / UPEC).